The chain runs to 307 residues: Elongation factor Ts (307 aa).

Residues 80-83 (TDFV) form an involved in Mg(2+) ion dislocation from EF-Tu region.

Belongs to the EF-Ts family.

The protein resides in the cytoplasm. In terms of biological role, associates with the EF-Tu.GDP complex and induces the exchange of GDP to GTP. It remains bound to the aminoacyl-tRNA.EF-Tu.GTP complex up to the GTP hydrolysis stage on the ribosome. The protein is Elongation factor Ts of Nitrobacter hamburgensis (strain DSM 10229 / NCIMB 13809 / X14).